The primary structure comprises 205 residues: Urease accessory protein UreG (205 aa).

Glycine 14 to threonine 21 contacts GTP.

The protein belongs to the SIMIBI class G3E GTPase family. UreG subfamily. In terms of assembly, homodimer. UreD, UreF and UreG form a complex that acts as a GTP-hydrolysis-dependent molecular chaperone, activating the urease apoprotein by helping to assemble the nickel containing metallocenter of UreC. The UreE protein probably delivers the nickel.

Its subcellular location is the cytoplasm. Its function is as follows. Facilitates the functional incorporation of the urease nickel metallocenter. This process requires GTP hydrolysis, probably effectuated by UreG. This chain is Urease accessory protein UreG, found in Escherichia coli.